Here is a 210-residue protein sequence, read N- to C-terminus: Thiamine-phosphate synthase (210 aa).

Residues 38–42 (QLREK) and asparagine 70 contribute to the 4-amino-2-methyl-5-(diphosphooxymethyl)pyrimidine site. Residues aspartate 71 and aspartate 90 each coordinate Mg(2+). Serine 109 is a 4-amino-2-methyl-5-(diphosphooxymethyl)pyrimidine binding site. Position 139-141 (139-141 (TPT)) interacts with 2-[(2R,5Z)-2-carboxy-4-methylthiazol-5(2H)-ylidene]ethyl phosphate. Lysine 142 is a 4-amino-2-methyl-5-(diphosphooxymethyl)pyrimidine binding site. 2-[(2R,5Z)-2-carboxy-4-methylthiazol-5(2H)-ylidene]ethyl phosphate-binding positions include glycine 170 and 190–191 (VS).

It belongs to the thiamine-phosphate synthase family. Requires Mg(2+) as cofactor.

It carries out the reaction 2-[(2R,5Z)-2-carboxy-4-methylthiazol-5(2H)-ylidene]ethyl phosphate + 4-amino-2-methyl-5-(diphosphooxymethyl)pyrimidine + 2 H(+) = thiamine phosphate + CO2 + diphosphate. The catalysed reaction is 2-(2-carboxy-4-methylthiazol-5-yl)ethyl phosphate + 4-amino-2-methyl-5-(diphosphooxymethyl)pyrimidine + 2 H(+) = thiamine phosphate + CO2 + diphosphate. The enzyme catalyses 4-methyl-5-(2-phosphooxyethyl)-thiazole + 4-amino-2-methyl-5-(diphosphooxymethyl)pyrimidine + H(+) = thiamine phosphate + diphosphate. Its pathway is cofactor biosynthesis; thiamine diphosphate biosynthesis; thiamine phosphate from 4-amino-2-methyl-5-diphosphomethylpyrimidine and 4-methyl-5-(2-phosphoethyl)-thiazole: step 1/1. Its function is as follows. Condenses 4-methyl-5-(beta-hydroxyethyl)thiazole monophosphate (THZ-P) and 2-methyl-4-amino-5-hydroxymethyl pyrimidine pyrophosphate (HMP-PP) to form thiamine monophosphate (TMP). In Leptospira biflexa serovar Patoc (strain Patoc 1 / Ames), this protein is Thiamine-phosphate synthase.